Consider the following 483-residue polypeptide: Bromoperoxidase-catalase (483 aa).

The tract at residues 1-24 is disordered; it reads MTQGPLTTEAGAPVADNQNSETAG. Catalysis depends on residues His-54 and Asn-127. Tyr-337 is a heme binding site.

It belongs to the catalase family.

It carries out the reaction 2 H2O2 = O2 + 2 H2O. The chain is Bromoperoxidase-catalase (bca) from Streptomyces venezuelae (strain ATCC 10712 / CBS 650.69 / DSM 40230 / JCM 4526 / NBRC 13096 / PD 04745).